Reading from the N-terminus, the 319-residue chain is Acetyl-coenzyme A carboxylase carboxyl transferase subunit alpha (319 aa).

Residues 39-293 enclose the CoA carboxyltransferase C-terminal domain; that stretch reads RLQKKSNDLT…KAVLEKQLHE (255 aa).

The protein belongs to the AccA family. Acetyl-CoA carboxylase is a heterohexamer composed of biotin carboxyl carrier protein (AccB), biotin carboxylase (AccC) and two subunits each of ACCase subunit alpha (AccA) and ACCase subunit beta (AccD).

It is found in the cytoplasm. It catalyses the reaction N(6)-carboxybiotinyl-L-lysyl-[protein] + acetyl-CoA = N(6)-biotinyl-L-lysyl-[protein] + malonyl-CoA. It participates in lipid metabolism; malonyl-CoA biosynthesis; malonyl-CoA from acetyl-CoA: step 1/1. Functionally, component of the acetyl coenzyme A carboxylase (ACC) complex. First, biotin carboxylase catalyzes the carboxylation of biotin on its carrier protein (BCCP) and then the CO(2) group is transferred by the carboxyltransferase to acetyl-CoA to form malonyl-CoA. The sequence is that of Acetyl-coenzyme A carboxylase carboxyl transferase subunit alpha from Neisseria meningitidis serogroup B (strain ATCC BAA-335 / MC58).